The following is a 171-amino-acid chain: MMVKFLLLALVFGLAHVHAHDHPELQGQWKTTAIMADNIDKIETSGPLELFVREITCDEGCQKMKVTFYVKQNGQCSLTTVTGYKQEDGKTFKNQYEGENNYKLLKATSENLVFYDENVDRASRKTKLLYILGKGEALTHEQKERLTELATQKGIPAGNLRELAHEDTCPE.

Positions 1 to 19 are cleaved as a signal peptide; it reads MMVKFLLLALVFGLAHVHA. 2 disulfides stabilise this stretch: Cys57-Cys61 and Cys76-Cys169.

This sequence belongs to the calycin superfamily. Lipocalin family. May form a heterodimer with OBP1A. In terms of processing, the N-terminus may be blocked. Expressed in nasal mucosa (at protein level). Specifically detected in septal and lateral nasal glands.

It localises to the secreted. Its function is as follows. Binds the chemical odorant 2-isobutyl-3-methoxypyrazine. The polypeptide is Odorant-binding protein 1b (Mus musculus (Mouse)).